The chain runs to 316 residues: Transaldolase (316 aa).

Lys131 functions as the Schiff-base intermediate with substrate in the catalytic mechanism.

Belongs to the transaldolase family. Type 1 subfamily. In terms of assembly, homodimer.

It localises to the cytoplasm. The catalysed reaction is D-sedoheptulose 7-phosphate + D-glyceraldehyde 3-phosphate = D-erythrose 4-phosphate + beta-D-fructose 6-phosphate. The protein operates within carbohydrate degradation; pentose phosphate pathway; D-glyceraldehyde 3-phosphate and beta-D-fructose 6-phosphate from D-ribose 5-phosphate and D-xylulose 5-phosphate (non-oxidative stage): step 2/3. Transaldolase is important for the balance of metabolites in the pentose-phosphate pathway. This chain is Transaldolase, found in Buchnera aphidicola subsp. Acyrthosiphon pisum (strain 5A).